A 386-amino-acid polypeptide reads, in one-letter code: uncharacterized protein (386 aa).

This sequence belongs to the TelA family.

This is an uncharacterized protein from Bacillus subtilis (strain 168).